The chain runs to 527 residues: G patch domain-containing protein 2 (527 aa).

The disordered stretch occupies residues 35–135; the sequence is LEESSEQARG…RPSSNLSSSV (101 aa). The segment covering 62–76 has biased composition (basic residues); sequence RQARKRRGRKRRSYN. Positions 97–116 are enriched in basic and acidic residues; sequence EPSKDYREKHSNNKKDRSDS. Phosphoserine occurs at positions 114, 116, and 145. 3 disordered regions span residues 175 to 281, 350 to 375, and 480 to 527; these read SSKR…GDDE, TPSK…GSNK, and TPGS…GNPA. Over residues 186-196 the composition is skewed to basic and acidic residues; it reads GCRDQDMDNDR. Residues 206-215 show a composition bias toward basic residues; that stretch reads KKVKKRKLKG. Basic and acidic residues predominate over residues 231–257; it reads SEERSQPNKDRMEYEEQKASDELRSES. Residues 466–512 enclose the G-patch domain; it reads ESNIGNRMLQSMGWTPGSGLGRDGRGIAEPVQAVQRPKGLGLGFPLP. The segment covering 510–527 has biased composition (low complexity); it reads PLPKSSPTSPAPTSGNPA.

In terms of assembly, interacts with DHX15.

The protein resides in the nucleus speckle. It localises to the nucleus. Its subcellular location is the nucleolus. Enhances the ATPase activity of DHX15 in vitro. The polypeptide is G patch domain-containing protein 2 (Gpatch2) (Mus musculus (Mouse)).